Reading from the N-terminus, the 106-residue chain is UPF0213 protein VPA1222 (106 aa).

Residues 7–82 form the GIY-YIG domain; it reads QHWSVYLIRN…KQLTKSKKEQ (76 aa).

The protein belongs to the UPF0213 family.

This is UPF0213 protein VPA1222 from Vibrio parahaemolyticus serotype O3:K6 (strain RIMD 2210633).